Here is a 402-residue protein sequence, read N- to C-terminus: Deoxyguanosinetriphosphate triphosphohydrolase-like protein 2 (402 aa).

The HD domain occupies arginine 72 to alanine 215.

This sequence belongs to the dGTPase family. Type 2 subfamily.

This Vibrio cholerae serotype O1 (strain ATCC 39315 / El Tor Inaba N16961) protein is Deoxyguanosinetriphosphate triphosphohydrolase-like protein 2.